A 466-amino-acid chain; its full sequence is Fumarate hydratase class II (466 aa).

Substrate-binding positions include 99–101 (SGT), 129–132 (HPND), 139–141 (SSN), and Thr-187. The active-site Proton donor/acceptor is the His-188. Residue Ser-318 is part of the active site. Substrate is bound by residues Ser-319 and 324-326 (KVN).

This sequence belongs to the class-II fumarase/aspartase family. Fumarase subfamily. Homotetramer.

The protein localises to the cytoplasm. The enzyme catalyses (S)-malate = fumarate + H2O. Its pathway is carbohydrate metabolism; tricarboxylic acid cycle; (S)-malate from fumarate: step 1/1. Functionally, involved in the TCA cycle. Catalyzes the stereospecific interconversion of fumarate to L-malate. The chain is Fumarate hydratase class II from Thermus thermophilus (strain ATCC BAA-163 / DSM 7039 / HB27).